Consider the following 419-residue polypeptide: MLAARTGAAGSQISEENTKLRRQSGFSVAGKDKSPKKASENAKDSSLSPSGESQLRARQLALLREVEMNWYLKLCDLSSEHTTVCTTGMPHRNLGKSGLRVSCLGLGTWVTFGGQISDEVAERLMTIAYESGVNLFDTAEVYAAGKAEVILGSIIKKKGWRRSSLVITTKLYWGGKAETERGLSRKHIIEGLKGSLQRLQLEYVDVVFANRPDSNTPMEEIVRAMTHVINQGMAMYWGTSRWSAMEIMEAYSVARQFNMIPPVCEQAEYHLFQREKVEVQLPELYHKIGVGAMTWSPLACGIISGKYGNGVPESSRASLKCYQWLKERIVSEEGRKQQNKLKDLSPIAERLGCTLPQLAVAWCLRNEGVSSVLLGSSTPEQLIENLGAIQVLPKMTSHVVNEIDNILRNKPYSKKDYRS.

Residues 1–52 form a disordered region; it reads MLAARTGAAGSQISEENTKLRRQSGFSVAGKDKSPKKASENAKDSSLSPSGE. Residues 30–43 show a composition bias toward basic and acidic residues; sequence GKDKSPKKASENAK. NADP(+) contacts are provided by Thr108, Trp109, Gln115, and Asp137. Catalysis depends on Tyr142, which acts as the Proton donor/acceptor. The NADP(+) site is built by Asn210, Ser240, Arg241, Gln266, Trp295, Ser296, Pro297, Leu298, Ala299, Cys300, Lys306, Arg316, Gly375, Ser377, Gln381, Glu384, and Asn385.

This sequence belongs to the shaker potassium channel beta subunit family. In terms of assembly, homotetramer. Interaction with tetrameric potassium channel alpha subunits gives rise to a heterooctamer. Identified in potassium channel complexes containing KCNA1, KCNA2, KCNA4, KCNA5, KCNA6, KCNAB1 and KCNAB2. Part of a complex containing KCNA1, KCNA4 and LGI1; interaction with LGI1 inhibits down-regulation of KCNA1 channel activity. Interacts with the dimer formed by GNB1 and GNG2; this enhances KCNA1 binding. Interacts with SQSTM1. In brain, expression is most prominent in caudate nucleus, hippocampus and thalamus. Significant expression also detected in amygdala and subthalamic nucleus. Also expressed in both healthy and cardiomyopathic heart. Up to four times more abundant in left ventricle than left atrium.

Its subcellular location is the cytoplasm. The protein localises to the membrane. It is found in the cell membrane. It carries out the reaction a primary alcohol + NADP(+) = an aldehyde + NADPH + H(+). The enzyme catalyses a secondary alcohol + NADP(+) = a ketone + NADPH + H(+). In terms of biological role, regulatory subunit of the voltage-gated potassium (Kv) Shaker channels composed of pore-forming and potassium-conducting alpha subunits and of regulatory beta subunits. The beta-1/KCNAB1 cytoplasmic subunit mediates closure of delayed rectifier potassium channels by physically obstructing the pore via its N-terminal domain and increases the speed of channel closure for other family members. Promotes the inactivation of Kv1.1/KCNA1, Kv1.2/KCNA2, Kv1.4/KCNA4, Kv1.5/KCNA5 and Kv1.6/KCNA6 alpha subunit-containing channels. Displays nicotinamide adenine dinucleotide phosphate (NADPH)-dependent aldoketoreductase activity by catalyzing the NADPH-dependent reduction of a variety of endogenous aldehydes and ketones. The binding of NADPH is required for efficient down-regulation of potassium channel activity. Oxidation of the bound NADPH restrains N-terminal domain from blocking the channel, thereby decreasing N-type inactivation of potassium channel activity. Functionally, isoform KvB1.2 shows no effect on KCNA1, KCNA2 or KCNB1. The sequence is that of Voltage-gated potassium channel subunit beta-1 from Homo sapiens (Human).